The chain runs to 224 residues: Thiamine-phosphate synthase (224 aa).

4-amino-2-methyl-5-(diphosphooxymethyl)pyrimidine contacts are provided by residues 43–47 (QYRPK) and Asn-75. 2 residues coordinate Mg(2+): Asp-76 and Asp-95. Residue Ser-114 participates in 4-amino-2-methyl-5-(diphosphooxymethyl)pyrimidine binding. Residue 141–143 (SAT) participates in 2-[(2R,5Z)-2-carboxy-4-methylthiazol-5(2H)-ylidene]ethyl phosphate binding. Lys-144 contacts 4-amino-2-methyl-5-(diphosphooxymethyl)pyrimidine. Gly-171 serves as a coordination point for 2-[(2R,5Z)-2-carboxy-4-methylthiazol-5(2H)-ylidene]ethyl phosphate.

It belongs to the thiamine-phosphate synthase family. The cofactor is Mg(2+).

The catalysed reaction is 2-[(2R,5Z)-2-carboxy-4-methylthiazol-5(2H)-ylidene]ethyl phosphate + 4-amino-2-methyl-5-(diphosphooxymethyl)pyrimidine + 2 H(+) = thiamine phosphate + CO2 + diphosphate. The enzyme catalyses 2-(2-carboxy-4-methylthiazol-5-yl)ethyl phosphate + 4-amino-2-methyl-5-(diphosphooxymethyl)pyrimidine + 2 H(+) = thiamine phosphate + CO2 + diphosphate. It carries out the reaction 4-methyl-5-(2-phosphooxyethyl)-thiazole + 4-amino-2-methyl-5-(diphosphooxymethyl)pyrimidine + H(+) = thiamine phosphate + diphosphate. Its pathway is cofactor biosynthesis; thiamine diphosphate biosynthesis; thiamine phosphate from 4-amino-2-methyl-5-diphosphomethylpyrimidine and 4-methyl-5-(2-phosphoethyl)-thiazole: step 1/1. Functionally, condenses 4-methyl-5-(beta-hydroxyethyl)thiazole monophosphate (THZ-P) and 2-methyl-4-amino-5-hydroxymethyl pyrimidine pyrophosphate (HMP-PP) to form thiamine monophosphate (TMP). This Methylococcus capsulatus (strain ATCC 33009 / NCIMB 11132 / Bath) protein is Thiamine-phosphate synthase.